A 65-amino-acid chain; its full sequence is Crotamine (65 aa).

The N-terminal stretch at 1–22 (MKILYLLFAFLFLAFLSEPGNA) is a signal peptide. 2 short sequence motifs (nuclear localization signal) span residues 24-40 (KQCHKKGGHCFPKEKIC) and 49-61 (KMDCRWRWKCCKK). 3 cysteine pairs are disulfide-bonded: cysteine 26–cysteine 58, cysteine 33–cysteine 52, and cysteine 40–cysteine 59.

This sequence belongs to the crotamine-myotoxin family. In terms of assembly, monomer. Expressed by the venom gland.

Its subcellular location is the secreted. Its function is as follows. Cationic peptide that possesses multiple functions. It acts as a cell-penetrating peptide (CPP), and as a potent voltage-gated potassium channel inhibitor. It exhibits antimicrobial activities, hind limb paralysis, and severe muscle necrosis by a non-enzymatic mechanism. As a cell-penetrating peptide, crotamine has high specificity for actively proliferating cells, and interacts inside the cell with subcellular and subnuclear structures, like vesicular compartments, chromosomes and centrioles. It penetrates into the cells as fast as five minutes after its addition to cell culture medium. In vivo, after intraperitoneal administration, it is found in cells of peritoneal fluid and bone marrow, demonstrating preferential nuclear and perinuclear localization. To enter the cell, it interacts with the chains of heparan sulfate membrane proteoglycan (HSPG), and is endocytosed (in complex with HSPG) in vesicles which are transported into the cell with the help of clathrin. Inside the cell, crotamine accumulates in lysosomal vesicles. As soon as the peptide accumulates in endosomes/lysosomes vesicles, these compartments are disrupted and their contents released into the cytosol. This loss of lysosomal content induces cell death at high concentrations, or promotes the distribution of crotamine in cytoplasmic compartments, which is a step before crotamine nuclear uptake. As a potassium channel inhibitor, this toxin selectively inhibits Kv1.1/KCNA1, Kv1.2/KCNA2 and Kv1.3/KCNA3 channels with an IC(50) of 369, 386 and 287 nM, respectively. The inhibition of Kv1.3/KCNA channels induced by this toxin occurs rapidly and is voltage-independent. The channel inhibition is reversible after washing, suggesting a pure and classical channel blockage effect, without effects in potassium channel kinetics. As an antimicrobial peptide, crotamine shows antibacterial activity against E.coli and B.subtilis, and antifungal activity against Candida spp., Trichosporon spp. and C.neoformans. It kills bacteria through membrane permeabilization. The protein is Crotamine (CRO2) of Crotalus durissus terrificus (South American rattlesnake).